The following is a 327-amino-acid chain: MKIVFAGTPEPAAVALEHLIADERIEVVAVVTQPDAKRGRGRSLRPSKVAEVAEEAAIPTYKWPSLKAGTESGDEARAVLGDLAAQGVTAAAVVAYGNLIPKDILDVFEHGWVNLHYSLLPRWRGAAPVQAALAAGDETTGASIFRIEEGLDTGPVAAQLTQKIGLEDTADDLLASLTYAGRELLADTLVAMDEGKAELSGQDDAQATHAPKIHPADAQIDWSQPAEVIQRVARAHTPAPGAWTLLDGQRYKIGMLLPSDPADVAELGPGEVVASPKKVFVGTGTGPLEITRIQPPGKKMMEAAAWARGQQELLAGRPTFSARETGE.

118 to 121 contacts (6S)-5,6,7,8-tetrahydrofolate; it reads SLLP.

This sequence belongs to the Fmt family.

It catalyses the reaction L-methionyl-tRNA(fMet) + (6R)-10-formyltetrahydrofolate = N-formyl-L-methionyl-tRNA(fMet) + (6S)-5,6,7,8-tetrahydrofolate + H(+). Attaches a formyl group to the free amino group of methionyl-tRNA(fMet). The formyl group appears to play a dual role in the initiator identity of N-formylmethionyl-tRNA by promoting its recognition by IF2 and preventing the misappropriation of this tRNA by the elongation apparatus. In Corynebacterium jeikeium (strain K411), this protein is Methionyl-tRNA formyltransferase.